A 235-amino-acid polypeptide reads, in one-letter code: Large ribosomal subunit protein uL1 (235 aa).

This sequence belongs to the universal ribosomal protein uL1 family. As to quaternary structure, part of the 50S ribosomal subunit.

Binds directly to 23S rRNA. The L1 stalk is quite mobile in the ribosome, and is involved in E site tRNA release. Its function is as follows. Protein L1 is also a translational repressor protein, it controls the translation of the L11 operon by binding to its mRNA. In Prochlorococcus marinus (strain NATL1A), this protein is Large ribosomal subunit protein uL1.